We begin with the raw amino-acid sequence, 224 residues long: MSEMLVLDGLTKAYNRGRPGEVTVLRGATLSVGTGEVVALVAPSGAGKSTLLHIAGLLDTPDEGRVAIGGTEMAGLGDRARTGTRRREVGFIYQFHHLLPEFTALENVVLPQLANGVSRRGAEARARDLLGRVGVGAREGHRPAALSGGEQQRVAFCRALANAPRLLLADEPTGNLDPGTSDQVFGVLMDLVRGTGLSALIATHNLELAARMDRVVRLEAGRVV.

An ABC transporter domain is found at 5-224 (LVLDGLTKAY…VVRLEAGRVV (220 aa)). 42–49 (APSGAGKS) is an ATP binding site.

This sequence belongs to the ABC transporter superfamily. Lipoprotein translocase (TC 3.A.1.125) family. In terms of assembly, the complex is composed of two ATP-binding proteins (LolD) and two transmembrane proteins (LolC and LolE).

The protein resides in the cell inner membrane. Part of the ABC transporter complex LolCDE involved in the translocation of mature outer membrane-directed lipoproteins, from the inner membrane to the periplasmic chaperone, LolA. Responsible for the formation of the LolA-lipoprotein complex in an ATP-dependent manner. This Cereibacter sphaeroides (strain ATCC 17023 / DSM 158 / JCM 6121 / CCUG 31486 / LMG 2827 / NBRC 12203 / NCIMB 8253 / ATH 2.4.1.) (Rhodobacter sphaeroides) protein is Lipoprotein-releasing system ATP-binding protein LolD.